The sequence spans 372 residues: Queuine tRNA-ribosyltransferase (372 aa).

The Proton acceptor role is filled by D92. Residues D92 to Y96, D146, Q188, and G215 each bind substrate. Positions G246–E252 are RNA binding. D265 serves as the catalytic Nucleophile. Positions T270–R274 are RNA binding; important for wobble base 34 recognition. Zn(2+) contacts are provided by C303, C305, C308, and H334.

It belongs to the queuine tRNA-ribosyltransferase family. As to quaternary structure, homodimer. Within each dimer, one monomer is responsible for RNA recognition and catalysis, while the other monomer binds to the replacement base PreQ1. Requires Zn(2+) as cofactor.

The catalysed reaction is 7-aminomethyl-7-carbaguanine + guanosine(34) in tRNA = 7-aminomethyl-7-carbaguanosine(34) in tRNA + guanine. Its pathway is tRNA modification; tRNA-queuosine biosynthesis. Catalyzes the base-exchange of a guanine (G) residue with the queuine precursor 7-aminomethyl-7-deazaguanine (PreQ1) at position 34 (anticodon wobble position) in tRNAs with GU(N) anticodons (tRNA-Asp, -Asn, -His and -Tyr). Catalysis occurs through a double-displacement mechanism. The nucleophile active site attacks the C1' of nucleotide 34 to detach the guanine base from the RNA, forming a covalent enzyme-RNA intermediate. The proton acceptor active site deprotonates the incoming PreQ1, allowing a nucleophilic attack on the C1' of the ribose to form the product. After dissociation, two additional enzymatic reactions on the tRNA convert PreQ1 to queuine (Q), resulting in the hypermodified nucleoside queuosine (7-(((4,5-cis-dihydroxy-2-cyclopenten-1-yl)amino)methyl)-7-deazaguanosine). The protein is Queuine tRNA-ribosyltransferase of Prochlorococcus marinus (strain SARG / CCMP1375 / SS120).